The chain runs to 692 residues: Elongation factor G (692 aa).

Positions 8-282 (ENTRNIGIMA…AVIDYLPSPL (275 aa)) constitute a tr-type G domain. GTP contacts are provided by residues 17–24 (AHIDAGKT), 81–85 (DTPGH), and 135–138 (NKMD).

This sequence belongs to the TRAFAC class translation factor GTPase superfamily. Classic translation factor GTPase family. EF-G/EF-2 subfamily.

The protein resides in the cytoplasm. Functionally, catalyzes the GTP-dependent ribosomal translocation step during translation elongation. During this step, the ribosome changes from the pre-translocational (PRE) to the post-translocational (POST) state as the newly formed A-site-bound peptidyl-tRNA and P-site-bound deacylated tRNA move to the P and E sites, respectively. Catalyzes the coordinated movement of the two tRNA molecules, the mRNA and conformational changes in the ribosome. The polypeptide is Elongation factor G (Bacillus thuringiensis subsp. konkukian (strain 97-27)).